The chain runs to 427 residues: Arginine biosynthesis bifunctional protein ArgJ (427 aa).

Residues Thr-174, Lys-200, Thr-211, Glu-291, Asn-422, and Thr-427 each contribute to the substrate site. Thr-211 serves as the catalytic Nucleophile.

The protein belongs to the ArgJ family. In terms of assembly, heterotetramer of two alpha and two beta chains.

The protein localises to the cytoplasm. It carries out the reaction N(2)-acetyl-L-ornithine + L-glutamate = N-acetyl-L-glutamate + L-ornithine. The catalysed reaction is L-glutamate + acetyl-CoA = N-acetyl-L-glutamate + CoA + H(+). The protein operates within amino-acid biosynthesis; L-arginine biosynthesis; L-ornithine and N-acetyl-L-glutamate from L-glutamate and N(2)-acetyl-L-ornithine (cyclic): step 1/1. It functions in the pathway amino-acid biosynthesis; L-arginine biosynthesis; N(2)-acetyl-L-ornithine from L-glutamate: step 1/4. In terms of biological role, catalyzes two activities which are involved in the cyclic version of arginine biosynthesis: the synthesis of N-acetylglutamate from glutamate and acetyl-CoA as the acetyl donor, and of ornithine by transacetylation between N(2)-acetylornithine and glutamate. The chain is Arginine biosynthesis bifunctional protein ArgJ from Prochlorococcus marinus (strain MIT 9313).